The primary structure comprises 307 residues: Probable inactive peptidyl-prolyl cis-trans isomerase-like 6 (307 aa).

One can recognise a PPIase cyclophilin-type domain in the interval 141 to 304 (FLDISIDLYP…QNCVITASGQ (164 aa)).

It belongs to the cyclophilin-type PPIase family.

Functionally, probable inactive PPIase with no peptidyl-prolyl cis-trans isomerase activity. This chain is Probable inactive peptidyl-prolyl cis-trans isomerase-like 6, found in Bos taurus (Bovine).